The following is a 426-amino-acid chain: Phosphomethylpyrimidine synthase (426 aa).

Residues Asn-66, Met-95, Tyr-124, His-163, Ser-185 to Gly-187, Asp-226 to Arg-229, and Glu-265 contribute to the substrate site. His-269 contributes to the Zn(2+) binding site. Tyr-292 lines the substrate pocket. His-333 lines the Zn(2+) pocket. 3 residues coordinate [4Fe-4S] cluster: Cys-407, Cys-410, and Cys-414.

The protein belongs to the ThiC family. [4Fe-4S] cluster is required as a cofactor.

It catalyses the reaction 5-amino-1-(5-phospho-beta-D-ribosyl)imidazole + S-adenosyl-L-methionine = 4-amino-2-methyl-5-(phosphooxymethyl)pyrimidine + CO + 5'-deoxyadenosine + formate + L-methionine + 3 H(+). The protein operates within cofactor biosynthesis; thiamine diphosphate biosynthesis. Its function is as follows. Catalyzes the synthesis of the hydroxymethylpyrimidine phosphate (HMP-P) moiety of thiamine from aminoimidazole ribotide (AIR) in a radical S-adenosyl-L-methionine (SAM)-dependent reaction. This is Phosphomethylpyrimidine synthase from Thermococcus gammatolerans (strain DSM 15229 / JCM 11827 / EJ3).